Consider the following 108-residue polypeptide: uncharacterized protein (108 aa).

Helical transmembrane passes span T5 to I27 and I83 to F105.

It localises to the membrane. This is an uncharacterized protein from Schizosaccharomyces pombe (strain 972 / ATCC 24843) (Fission yeast).